The sequence spans 479 residues: Zinc finger and SCAN domain-containing protein 26 (479 aa).

Lys-17 is covalently cross-linked (Glycyl lysine isopeptide (Lys-Gly) (interchain with G-Cter in SUMO2)). The SCAN box domain occupies 51 to 133 (CKRFRQLRYE…VFLEDLQLEL (83 aa)). Residues 155-187 (TAPGKATPERQVQPEGDVPQPEREKGEAKRIEN) form a disordered region. Positions 174 to 187 (QPEREKGEAKRIEN) are enriched in basic and acidic residues. A C2H2-type 1; degenerate zinc finger spans residues 232 to 254 (CKCSEYGQAFFQHSDLIKHESSH). 7 consecutive C2H2-type zinc fingers follow at residues 283–305 (HQCHECGKAFQRSSHLVRHQKIH), 311–333 (YQCKECGKVFSQNAGLLEHLRIH), 339–361 (YLCIHCGKNFRRSSHLNRHQRIH), 367–389 (CQCKECGKTFSQALLLTHHQRIH), 395–417 (HQCNECGKTFSLTSDLIRHHRIH), 423–445 (FKCTICQKAFRLNSHLAQHVRIH), and 451–473 (YKCNECGEAFRQRSGLFQHQRYH).

It localises to the nucleus. Its function is as follows. May be involved in transcriptional regulation. The protein is Zinc finger and SCAN domain-containing protein 26 (ZSCAN26) of Bos taurus (Bovine).